Reading from the N-terminus, the 250-residue chain is 5'-nucleotidase SurE (250 aa).

4 residues coordinate a divalent metal cation: Asp8, Asp9, Ser39, and Asn91.

This sequence belongs to the SurE nucleotidase family. Requires a divalent metal cation as cofactor.

The protein localises to the cytoplasm. It catalyses the reaction a ribonucleoside 5'-phosphate + H2O = a ribonucleoside + phosphate. Nucleotidase that shows phosphatase activity on nucleoside 5'-monophosphates. This chain is 5'-nucleotidase SurE, found in Syntrophotalea carbinolica (strain DSM 2380 / NBRC 103641 / GraBd1) (Pelobacter carbinolicus).